The chain runs to 133 residues: ATP synthase epsilon chain (133 aa).

Belongs to the ATPase epsilon chain family. F-type ATPases have 2 components, CF(1) - the catalytic core - and CF(0) - the membrane proton channel. CF(1) has five subunits: alpha(3), beta(3), gamma(1), delta(1), epsilon(1). CF(0) has three main subunits: a, b and c.

The protein resides in the cell inner membrane. Functionally, produces ATP from ADP in the presence of a proton gradient across the membrane. In Desulfosudis oleivorans (strain DSM 6200 / JCM 39069 / Hxd3) (Desulfococcus oleovorans), this protein is ATP synthase epsilon chain.